The following is a 568-amino-acid chain: Proline--tRNA ligase (568 aa).

It belongs to the class-II aminoacyl-tRNA synthetase family. ProS type 1 subfamily. In terms of assembly, homodimer.

It is found in the cytoplasm. The enzyme catalyses tRNA(Pro) + L-proline + ATP = L-prolyl-tRNA(Pro) + AMP + diphosphate. Catalyzes the attachment of proline to tRNA(Pro) in a two-step reaction: proline is first activated by ATP to form Pro-AMP and then transferred to the acceptor end of tRNA(Pro). As ProRS can inadvertently accommodate and process non-cognate amino acids such as alanine and cysteine, to avoid such errors it has two additional distinct editing activities against alanine. One activity is designated as 'pretransfer' editing and involves the tRNA(Pro)-independent hydrolysis of activated Ala-AMP. The other activity is designated 'posttransfer' editing and involves deacylation of mischarged Ala-tRNA(Pro). The misacylated Cys-tRNA(Pro) is not edited by ProRS. In Campylobacter jejuni subsp. jejuni serotype O:6 (strain 81116 / NCTC 11828), this protein is Proline--tRNA ligase.